The primary structure comprises 123 residues: Protein crumbs homolog 3 (123 aa).

A signal peptide spans 1 to 26 (MASPGLGLLLALGLPLLPARWGRAWG). The Extracellular segment spans residues 27 to 59 (QTLDPHVNENGTITPSAPGSGSNGALSQEAITA). N-linked (GlcNAc...) asparagine glycosylation occurs at Asn-36. A helical membrane pass occupies residues 60–80 (IIVVFSLLAAVLLAVGLVLLL). Residues 81-120 (RKLREKRQTQGTYRPSSEEQFNHAAEARAPQDSKETVRGC) lie on the Cytoplasmic side of the membrane. Positions 87 to 123 (RQTQGTYRPSSEEQFNHAAEARAPQDSKETVRGCLPI) are disordered. Residues 96-117 (SSEEQFNHAAEARAPQDSKETV) show a composition bias toward basic and acidic residues. Positions 119–123 (GCLPI) match the PDZ-binding motif.

Component of a complex composed of CRB3, PALS1 and PATJ. Interacts (via C-terminus) with PALS1 (via PDZ domain). Interacts with PARD6A. Interacts (via intracellular domain) with EPB41L5. Interacts with WDR83.

The protein localises to the apical cell membrane. It localises to the cell junction. The protein resides in the tight junction. In terms of biological role, involved in the establishment of cell polarity in mammalian epithelial cells. Regulates the morphogenesis of tight junctions. Involved in promoting phosphorylation and cytoplasmic retention of transcriptional coactivators YAP1 and WWTR1/TAZ which leads to suppression of TGFB1-dependent transcription of target genes such as CCN2/CTGF, SERPINE1/PAI1, SNAI1/SNAIL1 and SMAD7. The sequence is that of Protein crumbs homolog 3 from Canis lupus familiaris (Dog).